The sequence spans 374 residues: Probable quinol oxidase subunit 2 (374 aa).

The N-terminal stretch at 1-19 is a signal peptide; the sequence is MSKFKSLLLLFGTLILLSG. Residue Cys-20 is the site of N-palmitoyl cysteine attachment. Residue Cys-20 is the site of S-diacylglycerol cysteine attachment. Helical transmembrane passes span 43–63 and 82–102; these read SIIF…IFIF and IETI…IPTV. The tract at residues 317–374 is disordered; sequence ERHGMKPMILGNNEKYDNEFKKEEDHNSKEMEKISKGAKDENASKLHKKEHDDHGGGH. Residues 330 to 374 show a composition bias toward basic and acidic residues; the sequence is EKYDNEFKKEEDHNSKEMEKISKGAKDENASKLHKKEHDDHGGGH.

The protein belongs to the cytochrome c oxidase subunit 2 family.

It localises to the cell membrane. The catalysed reaction is 2 a quinol + O2 = 2 a quinone + 2 H2O. Catalyzes quinol oxidation with the concomitant reduction of oxygen to water. Subunit II transfers the electrons from a quinol to the binuclear center of the catalytic subunit I. The polypeptide is Probable quinol oxidase subunit 2 (qoxA) (Staphylococcus epidermidis (strain ATCC 12228 / FDA PCI 1200)).